Consider the following 248-residue polypeptide: Type III pantothenate kinase (248 aa).

Residue 6–13 participates in ATP binding; sequence DCGNSFIK. Residues Tyr92 and 99 to 102 contribute to the substrate site; that span reads GLDR. The Proton acceptor role is filled by Asp101. Asp121 serves as a coordination point for K(+). An ATP-binding site is contributed by Thr124. Thr180 provides a ligand contact to substrate.

The protein belongs to the type III pantothenate kinase family. Homodimer. NH4(+) is required as a cofactor. The cofactor is K(+).

Its subcellular location is the cytoplasm. It carries out the reaction (R)-pantothenate + ATP = (R)-4'-phosphopantothenate + ADP + H(+). The protein operates within cofactor biosynthesis; coenzyme A biosynthesis; CoA from (R)-pantothenate: step 1/5. Catalyzes the phosphorylation of pantothenate (Pan), the first step in CoA biosynthesis. This chain is Type III pantothenate kinase, found in Ectopseudomonas mendocina (strain ymp) (Pseudomonas mendocina).